Consider the following 474-residue polypeptide: PRAME family member 14 (474 aa).

LRR repeat units follow at residues 15–38 (QSLLRDQALSISAMEELPRVLYLP), 204–229 (LNSIQQLEIRNMSWPRLIRKLRCYLK), 271–294 (LLKIKLITFFSGHLEQLIRCLQNP), 319–342 (LGYLKHLNLSYVLLFRISLEPLGA), and 391–414 (MGALKDLLCHTSGLSKLSLETYPA).

Belongs to the PRAME family.

The polypeptide is PRAME family member 14 (Homo sapiens (Human)).